Here is a 396-residue protein sequence, read N- to C-terminus: MSGIKKVVLAYSGGLDTSVILKWLAVTYNCEVVTLTADLGQEEDLDGVDDKAMRTGASRAYVEDLQEEFARDFIFPMMRAGAVYEGRYLLGTSIARPLIAKRLVEIARAEGAQAVAHGATGKGNDQVRFELAVNALAPDLRVIAPWREWDLRSRTQLNAFAEEHGIPISNSAKQYSMDRNMLHCSFEGGELEDPWNEPGPNSYVMAVPMEQAPDEAEYISIDFEHGNPVAVNGERLSPAALVKKLNSIGGRHGIGRLDMVENRFVGIKSRGVYETPGGTLIHIAHRDLEGICIDRETMHLRDAMLPRYAAAIYNGFWFAPEREAMQAMIDVSQQRVTGTVRLKLYKGNAWPVGRQSPNTLYCHDLATFEDCATYDHKDAAGFIKLQGLRIRGYKKG.

Residues Ala-10 to Ser-18 and Ala-37 contribute to the ATP site. Positions 88 and 93 each coordinate L-citrulline. Gly-118 contacts ATP. Residues Thr-120, Asn-124, and Asp-125 each coordinate L-aspartate. Asn-124 provides a ligand contact to L-citrulline. Residues Arg-128, Ser-176, Ser-185, Glu-261, and Tyr-273 each coordinate L-citrulline.

This sequence belongs to the argininosuccinate synthase family. Type 1 subfamily. As to quaternary structure, homotetramer.

Its subcellular location is the cytoplasm. The catalysed reaction is L-citrulline + L-aspartate + ATP = 2-(N(omega)-L-arginino)succinate + AMP + diphosphate + H(+). Its pathway is amino-acid biosynthesis; L-arginine biosynthesis; L-arginine from L-ornithine and carbamoyl phosphate: step 2/3. The sequence is that of Argininosuccinate synthase from Nitratidesulfovibrio vulgaris (strain DP4) (Desulfovibrio vulgaris).